The chain runs to 427 residues: Adenylosuccinate synthetase (427 aa).

Residues 12 to 18 (GDEGKGK) and 40 to 42 (GHT) contribute to the GTP site. Catalysis depends on D13, which acts as the Proton acceptor. Residues D13 and G40 each coordinate Mg(2+). Residues 13–16 (DEGK), 38–41 (NAGH), T128, R142, Q223, T238, and R302 each bind IMP. H41 acts as the Proton donor in catalysis. 298–304 (TTTGRPR) is a substrate binding site. Residues R304, 330-332 (KLD), and 412-414 (AVG) each bind GTP.

The protein belongs to the adenylosuccinate synthetase family. Homodimer. It depends on Mg(2+) as a cofactor.

The protein resides in the cytoplasm. The enzyme catalyses IMP + L-aspartate + GTP = N(6)-(1,2-dicarboxyethyl)-AMP + GDP + phosphate + 2 H(+). Its pathway is purine metabolism; AMP biosynthesis via de novo pathway; AMP from IMP: step 1/2. In terms of biological role, plays an important role in the de novo pathway of purine nucleotide biosynthesis. Catalyzes the first committed step in the biosynthesis of AMP from IMP. In Moorella thermoacetica (strain ATCC 39073 / JCM 9320), this protein is Adenylosuccinate synthetase.